The chain runs to 371 residues: Alanine dehydrogenase (371 aa).

The substrate site is built by R15 and K75. H96 functions as the Proton donor/acceptor in the catalytic mechanism. NAD(+)-binding positions include S134, 178–179, D198, S220, 239–240, 267–270, R279, and 298–301; these read TA, VL, IAID, and VANM. The Proton donor/acceptor role is filled by D270.

Belongs to the AlaDH/PNT family. In terms of assembly, homohexamer. Trimer of dimers.

It localises to the cytoplasm. It carries out the reaction L-alanine + NAD(+) + H2O = pyruvate + NH4(+) + NADH + H(+). Its pathway is amino-acid degradation; L-alanine degradation via dehydrogenase pathway; NH(3) and pyruvate from L-alanine: step 1/1. In terms of biological role, catalyzes the reversible reductive amination of pyruvate to L-alanine. Required for proficient utilization of D- or L-alanine as a nitrogen source. May be required for the adaptation from aerobic growth to anaerobic dormancy. It could be involved in the maintenance of the NAD pool during the shift to an anaerobic dormant state in which oxygen as a terminal electron acceptor becomes limiting. This chain is Alanine dehydrogenase, found in Mycolicibacterium smegmatis (strain ATCC 700084 / mc(2)155) (Mycobacterium smegmatis).